The following is a 393-amino-acid chain: Ribonuclease D (393 aa).

The 3'-5' exonuclease domain occupies 14 to 181 (LITTTEDLTG…VYQLLLERLE (168 aa)). The 82-residue stretch at 219 to 300 (NRRMLGVLRA…AAARALPDGA (82 aa)) folds into the HRDC domain.

Belongs to the RNase D family. A divalent metal cation is required as a cofactor.

It localises to the cytoplasm. The enzyme catalyses Exonucleolytic cleavage that removes extra residues from the 3'-terminus of tRNA to produce 5'-mononucleotides.. Exonuclease involved in the 3' processing of various precursor tRNAs. Initiates hydrolysis at the 3'-terminus of an RNA molecule and releases 5'-mononucleotides. The polypeptide is Ribonuclease D (Gluconacetobacter diazotrophicus (strain ATCC 49037 / DSM 5601 / CCUG 37298 / CIP 103539 / LMG 7603 / PAl5)).